The primary structure comprises 80 residues: Acyl carrier protein (80 aa).

Residues 3–78 (DDTFSRIQSI…QVLEYIEAES (76 aa)) form the Carrier domain. At Ser38 the chain carries O-(pantetheine 4'-phosphoryl)serine.

The protein belongs to the acyl carrier protein (ACP) family. 4'-phosphopantetheine is transferred from CoA to a specific serine of apo-ACP by AcpS. This modification is essential for activity because fatty acids are bound in thioester linkage to the sulfhydryl of the prosthetic group.

Its subcellular location is the plastid. The protein localises to the chloroplast. The protein operates within lipid metabolism; fatty acid biosynthesis. Its function is as follows. Carrier of the growing fatty acid chain in fatty acid biosynthesis. The sequence is that of Acyl carrier protein from Trieres chinensis (Marine centric diatom).